The chain runs to 318 residues: Isoeugenol synthase 1 (318 aa).

NADP(+) is bound by residues 10-13 (TGYI), 32-43 (ARPLTPDSTPSS), arginine 33, 84-86 (VPM), 109-111 (SEF), lysine 131, and 151-153 (NCF). The Proton donor/acceptor role is filled by lysine 131. A substrate-binding site is contributed by proline 260.

This sequence belongs to the NmrA-type oxidoreductase family. Mostly expressed in petals, and, to a lower extent, in sepals, stamens and pistils.

It catalyses the reaction (E)-isoeugenol + acetate + NADP(+) = (E)-coniferyl acetate + NADPH. It functions in the pathway aromatic compound metabolism; phenylpropanoid biosynthesis. Functionally, catalyzes the synthesis of the phenylpropene isoeugenol from coniferyl acetate. Phenylpropenes are the primary constituents of various essential plant oils. They are produced as antimicrobial and antianimal compounds, or as floral attractants of pollinators. Isoeugenol is a characteristic aromatic constituent of spices and a floral volatile compound. This chain is Isoeugenol synthase 1, found in Clarkia breweri (Fairy fans).